Reading from the N-terminus, the 211-residue chain is Probable nicotinate-nucleotide adenylyltransferase (211 aa).

The protein belongs to the NadD family.

The catalysed reaction is nicotinate beta-D-ribonucleotide + ATP + H(+) = deamido-NAD(+) + diphosphate. Its pathway is cofactor biosynthesis; NAD(+) biosynthesis; deamido-NAD(+) from nicotinate D-ribonucleotide: step 1/1. Its function is as follows. Catalyzes the reversible adenylation of nicotinate mononucleotide (NaMN) to nicotinic acid adenine dinucleotide (NaAD). The chain is Probable nicotinate-nucleotide adenylyltransferase from Legionella pneumophila (strain Lens).